The chain runs to 446 residues: uncharacterized protein (446 aa).

3 disordered regions span residues 198 to 233, 309 to 337, and 394 to 431; these read SIQK…ENYS, NEDN…DDSK, and SESV…FGNT. Low complexity predominate over residues 199-224; sequence IQKQIPKQTQEQTQKQTQEQTQESSQ. The span at 317–333 shows a compositional bias: acidic residues; the sequence is DNEEDSDESDIESDSDL. The span at 397-418 shows a compositional bias: basic and acidic residues; that stretch reads VKSDSNESKSIKPESIKSESIK.

This is an uncharacterized protein from Acanthamoeba polyphaga mimivirus (APMV).